The following is a 246-amino-acid chain: tRNA (guanine-N(1)-)-methyltransferase (246 aa).

Residues Gly-113 and 133-138 (IGDFVM) contribute to the S-adenosyl-L-methionine site.

It belongs to the RNA methyltransferase TrmD family. Homodimer.

It is found in the cytoplasm. It catalyses the reaction guanosine(37) in tRNA + S-adenosyl-L-methionine = N(1)-methylguanosine(37) in tRNA + S-adenosyl-L-homocysteine + H(+). Functionally, specifically methylates guanosine-37 in various tRNAs. The polypeptide is tRNA (guanine-N(1)-)-methyltransferase (Vibrio atlanticus (strain LGP32) (Vibrio splendidus (strain Mel32))).